The sequence spans 94 residues: Neurotoxin 213 (94 aa).

The first 22 residues, 1–22 (MLKFILTCTSVILFTAVEDSSC), serve as a signal peptide directing secretion. The LCN-type CS-alpha/beta domain occupies 24–88 (KGGNYPISVY…YWDYHRNNCK (65 aa)). 3 disulfide bridges follow: Cys39–Cys62, Cys48–Cys67, and Cys52–Cys69.

It belongs to the long (3 C-C) scorpion toxin superfamily. Expressed by the venom gland.

Its subcellular location is the secreted. The protein is Neurotoxin 213 of Lychas mucronatus (Chinese swimming scorpion).